A 424-amino-acid chain; its full sequence is UPF0415 protein C7orf25 homolog (424 aa).

The protein belongs to the UPF0415 family.

This chain is UPF0415 protein C7orf25 homolog, found in Xenopus tropicalis (Western clawed frog).